Consider the following 488-residue polypeptide: Microtubule-destabilizing protein 60 (488 aa).

Polar residues predominate over residues 25–56 (AQEVSRFSENSNPNFVSHSTPLEKSSKSSAQK). 3 disordered regions span residues 25–71 (AQEV…VFSP), 262–304 (HASV…TKKQ), and 436–457 (DRPF…PKFN). The span at 264 to 280 (SVSSSWDNSVSSLNSNG) shows a compositional bias: low complexity.

It belongs to the TPX2 family.

The protein localises to the cytoplasm. It is found in the cytoskeleton. Binds directly to microtubules. Microtubule-destabilizing protein involved in the PIF3-dependent positive regulation of hypocotyl cell elongation via the modulation of cortical microtubules dynamic in response to light and ethylene signaling. Promotes submergence-induced and ethylene-dependent underwater hypocotyl elongation. The protein is Microtubule-destabilizing protein 60 of Arabidopsis thaliana (Mouse-ear cress).